The sequence spans 789 residues: Protein translocase subunit SecA (789 aa).

Residues glutamine 85, 103–107 (GEGKT), and aspartate 492 contribute to the ATP site.

Belongs to the SecA family. As to quaternary structure, monomer and homodimer. Part of the essential Sec protein translocation apparatus which comprises SecA, SecYEG and auxiliary proteins SecDF. Other proteins may also be involved.

The protein resides in the cell membrane. The protein localises to the cytoplasm. The catalysed reaction is ATP + H2O + cellular proteinSide 1 = ADP + phosphate + cellular proteinSide 2.. Functionally, part of the Sec protein translocase complex. Interacts with the SecYEG preprotein conducting channel. Has a central role in coupling the hydrolysis of ATP to the transfer of proteins into and across the cell membrane, serving as an ATP-driven molecular motor driving the stepwise translocation of polypeptide chains across the membrane. The chain is Protein translocase subunit SecA from Limosilactobacillus fermentum (strain NBRC 3956 / LMG 18251) (Lactobacillus fermentum).